Reading from the N-terminus, the 423-residue chain is uncharacterized protein (423 aa).

This is an uncharacterized protein from Rhizobium meliloti (strain 1021) (Ensifer meliloti).